A 377-amino-acid polypeptide reads, in one-letter code: NADH dehydrogenase [ubiquinone] 1 alpha subcomplex subunit 9, mitochondrial (377 aa).

The N-terminal 35 residues, 1-35, are a transit peptide targeting the mitochondrion; sequence MAAAAQSRVVRVLSMSRSAITAIATSVCHGPPCRQ. K175 carries the N6-succinyllysine modification. N6-acetyllysine is present on residues K189 and K370.

This sequence belongs to the complex I NDUFA9 subunit family. In terms of assembly, complex I is composed of 45 different subunits. This a component of the hydrophobic protein fraction. Interacts with BLOC1S1. Interacts with SLC2A4. Interacts with CLOCK. Interacts with RAB5IF. FAD is required as a cofactor. In terms of processing, acetylated on lysine residues. BLOC1S1 is required for acetylation. Acetylated by CLOCK in a circadian manner.

It is found in the mitochondrion matrix. Accessory subunit of the mitochondrial membrane respiratory chain NADH dehydrogenase (Complex I), that is believed not to be involved in catalysis. Required for proper complex I assembly. Complex I functions in the transfer of electrons from NADH to the respiratory chain. The immediate electron acceptor for the enzyme is believed to be ubiquinone. This is NADH dehydrogenase [ubiquinone] 1 alpha subcomplex subunit 9, mitochondrial (NDUFA9) from Homo sapiens (Human).